Reading from the N-terminus, the 355-residue chain is Fructose-bisphosphate aldolase, cytoplasmic isozyme (355 aa).

Substrate contacts are provided by R52 and K142. Catalysis depends on E183, which acts as the Proton acceptor. K225 acts as the Schiff-base intermediate with dihydroxyacetone-P in catalysis.

The protein belongs to the class I fructose-bisphosphate aldolase family.

It localises to the cytoplasm. It carries out the reaction beta-D-fructose 1,6-bisphosphate = D-glyceraldehyde 3-phosphate + dihydroxyacetone phosphate. Its pathway is carbohydrate degradation; glycolysis; D-glyceraldehyde 3-phosphate and glycerone phosphate from D-glucose: step 4/4. The protein is Fructose-bisphosphate aldolase, cytoplasmic isozyme of Zea mays (Maize).